The following is a 132-amino-acid chain: Small ribosomal subunit protein uS8 (132 aa).

The protein belongs to the universal ribosomal protein uS8 family. In terms of assembly, part of the 30S ribosomal subunit. Contacts proteins S5 and S12.

In terms of biological role, one of the primary rRNA binding proteins, it binds directly to 16S rRNA central domain where it helps coordinate assembly of the platform of the 30S subunit. This Coprothermobacter proteolyticus (strain ATCC 35245 / DSM 5265 / OCM 4 / BT) protein is Small ribosomal subunit protein uS8.